A 235-amino-acid polypeptide reads, in one-letter code: BPI fold-containing family A member 2 (235 aa).

Residues 1-20 (MFQLGSLVVLCGLLIGTSES) form the signal peptide. Cys-161 and Cys-204 are joined by a disulfide.

The protein belongs to the BPI/LBP/Plunc superfamily. Plunc family. Expressed in parotid, submandibular and sublingual glands.

Its subcellular location is the secreted. Functionally, has strong antibacterial activity against P.aeruginosa. The polypeptide is BPI fold-containing family A member 2 (Bpifa2) (Rattus norvegicus (Rat)).